A 324-amino-acid polypeptide reads, in one-letter code: Beta-ketoacyl-[acyl-carrier-protein] synthase III (324 aa).

Catalysis depends on residues Cys112 and His249. The ACP-binding stretch occupies residues 250–254; sequence QANRR. Asn279 is an active-site residue.

This sequence belongs to the thiolase-like superfamily. FabH family. In terms of assembly, homodimer.

Its subcellular location is the cytoplasm. The catalysed reaction is malonyl-[ACP] + acetyl-CoA + H(+) = 3-oxobutanoyl-[ACP] + CO2 + CoA. It functions in the pathway lipid metabolism; fatty acid biosynthesis. Catalyzes the condensation reaction of fatty acid synthesis by the addition to an acyl acceptor of two carbons from malonyl-ACP. Catalyzes the first condensation reaction which initiates fatty acid synthesis and may therefore play a role in governing the total rate of fatty acid production. Possesses both acetoacetyl-ACP synthase and acetyl transacylase activities. Its substrate specificity determines the biosynthesis of branched-chain and/or straight-chain of fatty acids. The chain is Beta-ketoacyl-[acyl-carrier-protein] synthase III from Streptococcus pyogenes serotype M6 (strain ATCC BAA-946 / MGAS10394).